The chain runs to 198 residues: Transcription antitermination protein NusB (198 aa).

This sequence belongs to the NusB family.

Involved in transcription antitermination. Required for transcription of ribosomal RNA (rRNA) genes. Binds specifically to the boxA antiterminator sequence of the ribosomal RNA (rrn) operons. In Methylococcus capsulatus (strain ATCC 33009 / NCIMB 11132 / Bath), this protein is Transcription antitermination protein NusB.